Here is a 658-residue protein sequence, read N- to C-terminus: Putative endo-beta-N-acetylglucosaminidase (658 aa).

The first 23 residues, 1–23 (MKKVRFIFLALLFFLASPEGAMA), serve as a signal peptide directing secretion. 13 Cell wall-binding repeats span residues 42–63 (ANEWVFDTHYQSWFYIKADANY), 65–84 (ENEWLKQGDDYFYLKSGGYM), 86–105 (KSEWVEDKGAFYYLDQDGKM), 124–145 (IEDWVYDSQYDAWFYIKADGQH), 147–166 (EKEWLQIKGKDYYFKSGGYL), 185–206 (QQGWLFDKQYQSWFYIKENGNY), 208–227 (DKEWIFENGHYYYLKSGGYM), 229–248 (ANEWIWDKESWFYLKFDGKM), 250–271 (EKEWVYDSHSQAWYYFKSGGYM), 273–292 (ANEWIWDKESWFYLKSDGKI), 294–315 (EKEWVYDSHSQAWYYFKSGGYM), 317–336 (ANEWIWDKESWFYLKSDGKI), and 338–359 (EKEWVYDSHSQAWYYFKSGGYM).

Belongs to the glycosyl hydrolase 73 family.

Its subcellular location is the secreted. The catalysed reaction is an N(4)-(oligosaccharide-(1-&gt;3)-[oligosaccharide-(1-&gt;6)]-beta-D-Man-(1-&gt;4)-beta-D-GlcNAc-(1-&gt;4)-alpha-D-GlcNAc)-L-asparaginyl-[protein] + H2O = an oligosaccharide-(1-&gt;3)-[oligosaccharide-(1-&gt;6)]-beta-D-Man-(1-&gt;4)-D-GlcNAc + N(4)-(N-acetyl-beta-D-glucosaminyl)-L-asparaginyl-[protein]. Functionally, plays an important role in cell wall degradation and cell separation. This is Putative endo-beta-N-acetylglucosaminidase (lytB) from Streptococcus pneumoniae serotype 4 (strain ATCC BAA-334 / TIGR4).